Here is a 512-residue protein sequence, read N- to C-terminus: GMP synthase [glutamine-hydrolyzing] (512 aa).

The Glutamine amidotransferase type-1 domain maps to 7–197 (LVLVVDFGGQ…LFKVAGLKAD (191 aa)). The active-site Nucleophile is Cys-84. Residues His-171 and Glu-173 contribute to the active site. In terms of domain architecture, GMPS ATP-PPase spans 198 to 387 (WSMASFAEEK…LGIPHKLVWR (190 aa)). 225 to 231 (SGGVDSS) contributes to the ATP binding site.

As to quaternary structure, homodimer.

The catalysed reaction is XMP + L-glutamine + ATP + H2O = GMP + L-glutamate + AMP + diphosphate + 2 H(+). It functions in the pathway purine metabolism; GMP biosynthesis; GMP from XMP (L-Gln route): step 1/1. Catalyzes the synthesis of GMP from XMP. This is GMP synthase [glutamine-hydrolyzing] from Clostridium novyi (strain NT).